Reading from the N-terminus, the 540-residue chain is ADP,ATP carrier protein 2 (540 aa).

Helical transmembrane passes span 23–43 (FSKF…YALL), 61–81 (VIPF…TMIY), 93–113 (VFIS…TVIY), 150–170 (LYYV…FWGV), 185–205 (ALIN…SLWL), 222–242 (EVLL…LYLY), 292–312 (LLGI…FEVV), 334–354 (ITTL…GQTI), 361–381 (IGAL…FGAI), 389–409 (MIFG…LGGV), 455–475 (SGGS…AASL), and 477–497 (AITI…AWLG).

Belongs to the ADP/ATP translocase tlc family.

The protein localises to the cell membrane. The sequence is that of ADP,ATP carrier protein 2 (tlcB) from Chlamydia trachomatis serovar D (strain ATCC VR-885 / DSM 19411 / UW-3/Cx).